Here is a 283-residue protein sequence, read N- to C-terminus: Zip homologous protein 4 (283 aa).

The RING-type zinc-finger motif lies at 6-50 (CFRCYKFPSKQIEFYLTNCMHMFCIECERLCHPPEEEPLKCIQCS). Disordered stretches follow at residues 149 to 175 (KKQL…SSRS) and 201 to 283 (TKAQ…RNSQ). Polar residues predominate over residues 163 to 175 (PRSNSLKVASSRS). Low complexity predominate over residues 202 to 216 (KAQAKAEAEAEAPAK). The segment covering 220 to 235 (SKAQTTKCTSNYQSHP) has biased composition (polar residues). Residues 267 to 283 (KKHEAQREKHKEHRNSQ) show a composition bias toward basic and acidic residues.

Interacts with zhp-3; the interaction is required for their localization along paired chromosomes and stability, and for the formation of chiasma during meiotic recombination. In terms of tissue distribution, expressed in the germline.

Its subcellular location is the chromosome. Functionally, recruited co-dependently with zhp-3 to the synaptonemal complex between homologous chromosome pairs to regulate the formation and number of crossover events between homologs during meiotic recombination. In the early stages of pachytene, in complex with zhp-4, recruited by the zhp-1-zhp-2 heterodimer to designated crossover sites along the recombination intermediate to stabilize other pro-crossover factors such as rmh-1, msh-5 and cosa-1. This in turn facilitates crossover and promotes the formation of chiasma in each meiotic nucleus at the late pachytene stage of meiosis. Negatively regulates double strand break formation to promote formation of the crossover intermediate. The protein is Zip homologous protein 4 of Caenorhabditis elegans.